Consider the following 538-residue polypeptide: Phosphoenolpyruvate carboxykinase (ATP) (538 aa).

Arginine 64, tyrosine 205, and lysine 211 together coordinate substrate. ATP contacts are provided by residues lysine 211, histidine 230, and glycine 246–threonine 254. Mn(2+) contacts are provided by lysine 211 and histidine 230. Aspartate 267 contributes to the Mn(2+) binding site. Residues glutamate 295, arginine 331, arginine 447–isoleucine 448, and threonine 453 contribute to the ATP site. Substrate is bound at residue arginine 331.

The protein belongs to the phosphoenolpyruvate carboxykinase (ATP) family. As to quaternary structure, monomer. Requires Mn(2+) as cofactor.

The protein localises to the cytoplasm. The enzyme catalyses oxaloacetate + ATP = phosphoenolpyruvate + ADP + CO2. Its pathway is carbohydrate biosynthesis; gluconeogenesis. Involved in the gluconeogenesis. Catalyzes the conversion of oxaloacetate (OAA) to phosphoenolpyruvate (PEP) through direct phosphoryl transfer between the nucleoside triphosphate and OAA. In Haemophilus influenzae (strain PittGG), this protein is Phosphoenolpyruvate carboxykinase (ATP).